A 786-amino-acid chain; its full sequence is Endonuclease MutS2 (786 aa).

335–342 (GPNTGGKT) serves as a coordination point for ATP. In terms of domain architecture, Smr spans 711-786 (LDLRGERFEN…GLGVTVVELK (76 aa)).

This sequence belongs to the DNA mismatch repair MutS family. MutS2 subfamily. As to quaternary structure, homodimer. Binds to stalled ribosomes, contacting rRNA.

Functionally, endonuclease that is involved in the suppression of homologous recombination and thus may have a key role in the control of bacterial genetic diversity. Acts as a ribosome collision sensor, splitting the ribosome into its 2 subunits. Detects stalled/collided 70S ribosomes which it binds and splits by an ATP-hydrolysis driven conformational change. Acts upstream of the ribosome quality control system (RQC), a ribosome-associated complex that mediates the extraction of incompletely synthesized nascent chains from stalled ribosomes and their subsequent degradation. Probably generates substrates for RQC. The sequence is that of Endonuclease MutS2 from Bacillus cytotoxicus (strain DSM 22905 / CIP 110041 / 391-98 / NVH 391-98).